A 351-amino-acid chain; its full sequence is Dysbindin (351 aa).

Positions 106–179 (FLADLECLTA…AELDAEHAQK (74 aa)) form a coiled coil. Residues 291–325 (RHKLSSLSSTCTDSASQEASEGESPVVQSDEEEVQ) form a disordered region. A compositionally biased stretch (low complexity) spans 295–306 (SSLSSTCTDSAS).

This sequence belongs to the dysbindin family. In terms of assembly, component of the biogenesis of lysosome-related organelles complex 1 (BLOC-1).

It localises to the cytoplasm. The protein localises to the cytoplasmic vesicle membrane. It is found in the cytoplasmic vesicle. The protein resides in the secretory vesicle. Its subcellular location is the synaptic vesicle membrane. It localises to the endosome membrane. The protein localises to the melanosome membrane. It is found in the nucleus. The protein resides in the postsynaptic density. Its subcellular location is the endoplasmic reticulum. Functionally, component of the BLOC-1 complex, a complex that is required for normal biogenesis of lysosome-related organelles (LRO), such as platelet dense granules and melanosomes. Plays a role in intracellular vesicle trafficking. Plays a role in synaptic vesicle trafficking and in neurotransmitter release. May be required for normal dopamine homeostasis in the cerebral cortex, hippocampus, and hypothalamus. Plays a role in the regulation of cell surface exposure of DRD2. Contributes to the regulation of dopamine signaling. May play a role in actin cytoskeleton reorganization and neurite outgrowth. In Gallus gallus (Chicken), this protein is Dysbindin (DTNBP1).